Here is a 192-residue protein sequence, read N- to C-terminus: dTTP/UTP pyrophosphatase (192 aa).

Aspartate 70 acts as the Proton acceptor in catalysis.

This sequence belongs to the Maf family. YhdE subfamily. A divalent metal cation serves as cofactor.

It is found in the cytoplasm. It catalyses the reaction dTTP + H2O = dTMP + diphosphate + H(+). The catalysed reaction is UTP + H2O = UMP + diphosphate + H(+). Nucleoside triphosphate pyrophosphatase that hydrolyzes dTTP and UTP. May have a dual role in cell division arrest and in preventing the incorporation of modified nucleotides into cellular nucleic acids. This Alkaliphilus oremlandii (strain OhILAs) (Clostridium oremlandii (strain OhILAs)) protein is dTTP/UTP pyrophosphatase.